The chain runs to 509 residues: Steroid 17-alpha-hydroxylase/17,20 lyase (509 aa).

Position 202 (Asn202) interacts with substrate. Cys442 is a heme binding site.

Belongs to the cytochrome P450 family. Requires heme as cofactor.

Its subcellular location is the endoplasmic reticulum membrane. It is found in the microsome membrane. The catalysed reaction is a C21-steroid + reduced [NADPH--hemoprotein reductase] + O2 = a 17alpha-hydroxy-C21-steroid + oxidized [NADPH--hemoprotein reductase] + H2O + H(+). It catalyses the reaction progesterone + reduced [NADPH--hemoprotein reductase] + O2 = 17alpha-hydroxyprogesterone + oxidized [NADPH--hemoprotein reductase] + H2O + H(+). It carries out the reaction pregnenolone + reduced [NADPH--hemoprotein reductase] + O2 = 17alpha-hydroxypregnenolone + oxidized [NADPH--hemoprotein reductase] + H2O + H(+). The enzyme catalyses 17alpha-hydroxyprogesterone + reduced [NADPH--hemoprotein reductase] + O2 = androst-4-ene-3,17-dione + acetate + oxidized [NADPH--hemoprotein reductase] + H2O + 2 H(+). The catalysed reaction is 17alpha-hydroxyprogesterone + reduced [NADPH--hemoprotein reductase] + O2 = 16alpha,17alpha-dihydroxyprogesterone + oxidized [NADPH--hemoprotein reductase] + H2O + H(+). It catalyses the reaction 16alpha,17alpha-dihydroxyprogesterone + reduced [NADPH--hemoprotein reductase] + O2 = 6beta,16alpha,17alpha-trihydroxyprogesterone + oxidized [NADPH--hemoprotein reductase] + H2O + H(+). It carries out the reaction 17alpha-hydroxypregnenolone + reduced [NADPH--hemoprotein reductase] + O2 = 3beta-hydroxyandrost-5-en-17-one + acetate + oxidized [NADPH--hemoprotein reductase] + H2O + 2 H(+). The enzyme catalyses 16alpha,17alpha-dihydroxypregnenolone + reduced [NADPH--hemoprotein reductase] + O2 = 3beta,16alpha-dihydroxy-androst-5-en-17-one + acetate + oxidized [NADPH--hemoprotein reductase] + H2O + 2 H(+). The catalysed reaction is 3beta-hydroxyandrost-5-en-17-one + reduced [NADPH--hemoprotein reductase] + O2 = 3beta,16alpha-dihydroxy-androst-5-en-17-one + oxidized [NADPH--hemoprotein reductase] + H2O + H(+). It catalyses the reaction androst-4-ene-3,17-dione + reduced [NADPH--hemoprotein reductase] + O2 = 16alpha-hydroxyandrost-4-ene-3,17-dione + oxidized [NADPH--hemoprotein reductase] + H2O + H(+). It participates in steroid hormone biosynthesis. Its pathway is steroid biosynthesis; glucocorticoid biosynthesis. Regulated predominantly by intracellular cAMP levels. The 17,20-lyase activity is stimulated by cytochrome b5, which acts as an allosteric effector increasing the Vmax of the lyase activity. Functionally, a cytochrome P450 monooxygenase involved in corticoid and androgen biosynthesis. Catalyzes 17-alpha hydroxylation of C21 steroids, which is common for both pathways. A second oxidative step, required only for androgen synthesis, involves an acyl-carbon cleavage. The 17-alpha hydroxy intermediates, as part of adrenal glucocorticoids biosynthesis pathway, are precursors of cortisol. Hydroxylates steroid hormones, pregnenolone and progesterone to form 17-alpha hydroxy metabolites, followed by the cleavage of the C17-C20 bond to form C19 steroids, dehydroepiandrosterone (DHEA) and androstenedione. Has 16-alpha hydroxylase activity. Catalyzes 16-alpha hydroxylation of 17-alpha hydroxy pregnenolone, followed by the cleavage of the C17-C20 bond to form 16-alpha-hydroxy DHEA. Also 16-alpha hydroxylates androgens, relevant for estriol synthesis. Mechanistically, uses molecular oxygen inserting one oxygen atom into a substrate, and reducing the second into a water molecule, with two electrons provided by NADPH via cytochrome P450 reductase (CPR; NADPH-ferrihemoprotein reductase). The protein is Steroid 17-alpha-hydroxylase/17,20 lyase (CYP17A1) of Sus scrofa (Pig).